A 218-amino-acid chain; its full sequence is Ribonuclease T (218 aa).

In terms of domain architecture, Exonuclease spans Val24–Phe198. Residues Asp27, Glu29, His185, and Asp190 each coordinate Mg(2+). The Proton donor/acceptor role is filled by His185.

Belongs to the RNase T family. In terms of assembly, homodimer. Mg(2+) serves as cofactor.

Its function is as follows. Trims short 3' overhangs of a variety of RNA species, leaving a one or two nucleotide 3' overhang. Responsible for the end-turnover of tRNA: specifically removes the terminal AMP residue from uncharged tRNA (tRNA-C-C-A). Also appears to be involved in tRNA biosynthesis. In Histophilus somni (strain 129Pt) (Haemophilus somnus), this protein is Ribonuclease T.